A 1220-amino-acid chain; its full sequence is Diacylglycerol kinase delta (1220 aa).

The tract at residues 1-47 (MAAAAGAPPPGPPQPPPPPPPEESSDSEPEAEPGSPQKLIRKVSTSG) is disordered. The regulates association with membranes stretch occupies residues 1 to 52 (MAAAAGAPPPGPPQPPPPPPPEESSDSEPEAEPGSPQKLIRKVSTSGQIRQK). The span at 7-22 (APPPGPPQPPPPPPPE) shows a compositional bias: pro residues. Residues 53 to 146 (TILKEGMLTK…WIAALKTVQN (94 aa)) enclose the PH domain. 2 consecutive Phorbol-ester/DAG-type zinc fingers follow at residues 163 to 213 (MHNW…TSNC) and 235 to 286 (PHQW…VMKC). In terms of domain architecture, DAGKc spans 317–451 (SCTSPLLVFV…MLDRWSVMAY (135 aa)). Positions 554 to 584 (DDESQASSSLSNPPPTIAEEAEDGDGSGNIC) are disordered. Positions 1151–1214 (WGTEEVAAWL…LCGIKELSRS (64 aa)) constitute an SAM domain.

It belongs to the eukaryotic diacylglycerol kinase family. Homooligomer. Monomer. Interacts with AP2A2; regulates clathrin-dependent endocytosis. As to expression, widely expressed.

It localises to the cell membrane. The protein localises to the membrane. It is found in the clathrin-coated pit. The protein resides in the cytoplasm. It carries out the reaction a 1,2-diacyl-sn-glycerol + ATP = a 1,2-diacyl-sn-glycero-3-phosphate + ADP + H(+). The enzyme catalyses 1,2-di-(9Z-octadecenoyl)-sn-glycerol + ATP = 1,2-di-(9Z-octadecenoyl)-sn-glycero-3-phosphate + ADP + H(+). The catalysed reaction is 1-octadecanoyl-2-(5Z,8Z,11Z,14Z-eicosatetraenoyl)-sn-glycerol + ATP = 1-octadecanoyl-2-(5Z,8Z,11Z,14Z-eicosatetraenoyl)-sn-glycero-3-phosphate + ADP + H(+). It functions in the pathway lipid metabolism; glycerolipid metabolism. Its function is as follows. Diacylglycerol kinase that converts diacylglycerol/DAG into phosphatidic acid/phosphatidate/PA and regulates the respective levels of these two bioactive lipids. Thereby, acts as a central switch between the signaling pathways activated by these second messengers with different cellular targets and opposite effects in numerous biological processes. By controlling the levels of diacylglycerol, regulates for instance the PKC and EGF receptor signaling pathways and plays a crucial role during development. May also regulate clathrin-dependent endocytosis. This is Diacylglycerol kinase delta from Mus musculus (Mouse).